The primary structure comprises 473 residues: MFETIIGLEVHCQLNTKTKIFCSCPTSFGDKANVHVCPTCLALPGALPVLNKEAVKKAIMFGTAVNATINKKSVFDRKNYFYPDLPKAYQISQFTIPIVEHGELFININGENKRIGITRAHLEEDAGKNTHEEGRSLVDLNRAGTPLLEIVSEPDMRSGDEAVAYLKKLHSILRFINISDANMQEGSFRCDVNVSIRPKGDEKLYTRVEIKNLNSFKFVQKAIEYEVARQIDAWEDGKYSELVVQETRLFDTSNFTTRSMRSKEDSAEYRYFPDPDLLTVEISDEMLEEARKIPELPNEKKERYINELGLKKDDAEVIISSYEHAKFFEDLINAGHEPKLCVTWLNVELNGRLKNGLTIEDSPIDSAKMSDLLSRIEDGTISQKAAKEVLDFIMENIEISVDDVIKKLGLKQVSDDATILAVIDAVISKNEQKVAEYRNGKDKLFGFFVGQVMKEGKGAFNPAKVNELLKQKL.

It belongs to the GatB/GatE family. GatB subfamily. In terms of assembly, heterotrimer of A, B and C subunits.

It carries out the reaction L-glutamyl-tRNA(Gln) + L-glutamine + ATP + H2O = L-glutaminyl-tRNA(Gln) + L-glutamate + ADP + phosphate + H(+). The catalysed reaction is L-aspartyl-tRNA(Asn) + L-glutamine + ATP + H2O = L-asparaginyl-tRNA(Asn) + L-glutamate + ADP + phosphate + 2 H(+). Allows the formation of correctly charged Asn-tRNA(Asn) or Gln-tRNA(Gln) through the transamidation of misacylated Asp-tRNA(Asn) or Glu-tRNA(Gln) in organisms which lack either or both of asparaginyl-tRNA or glutaminyl-tRNA synthetases. The reaction takes place in the presence of glutamine and ATP through an activated phospho-Asp-tRNA(Asn) or phospho-Glu-tRNA(Gln). The sequence is that of Aspartyl/glutamyl-tRNA(Asn/Gln) amidotransferase subunit B from Campylobacter hominis (strain ATCC BAA-381 / DSM 21671 / CCUG 45161 / LMG 19568 / NCTC 13146 / CH001A).